Here is a 483-residue protein sequence, read N- to C-terminus: Isocitrate dehydrogenase [NADP] (483 aa).

Thr-74 lines the NADP(+) pocket. Residues Ser-83, Asn-85, Arg-89, Arg-99, and Arg-121 each contribute to the D-threo-isocitrate site. A Mg(2+)-binding site is contributed by Asp-232. NADP(+) is bound by residues 264–270 (HGSAPDI) and Asn-277.

Belongs to the isocitrate and isopropylmalate dehydrogenases family. In terms of assembly, homodimer. The cofactor is Mg(2+). Mn(2+) serves as cofactor.

It catalyses the reaction D-threo-isocitrate + NADP(+) = 2-oxoglutarate + CO2 + NADPH. Functionally, catalyzes the oxidative decarboxylation of isocitrate to 2-oxoglutarate and carbon dioxide with the concomitant reduction of NADP(+). The chain is Isocitrate dehydrogenase [NADP] (icd) from Rickettsia conorii (strain ATCC VR-613 / Malish 7).